The following is a 155-amino-acid chain: Myosin light chain alkali (155 aa).

EF-hand domains are found at residues 7-41 and 80-115; these read REVE…LNLN and GCYE…LGES.

In terms of assembly, myosin is a hexamer of 2 heavy chains and 4 light chains.

The sequence is that of Myosin light chain alkali (Mlc1) from Drosophila virilis (Fruit fly).